The chain runs to 107 residues: Translation initiation factor IF-1, chloroplastic (107 aa).

Residues 8–83 (REKKNPREAK…SKGRIIYRLP (76 aa)) form the S1-like domain. Residues 81-107 (RLPHKDSKRTEDSKDTEDLKDTKDSKG) are disordered. Basic and acidic residues predominate over residues 83–107 (PHKDSKRTEDSKDTEDLKDTKDSKG).

The protein belongs to the IF-1 family. Component of the 30S ribosomal translation pre-initiation complex which assembles on the 30S ribosome in the order IF-2 and IF-3, IF-1 and N-formylmethionyl-tRNA(fMet); mRNA recruitment can occur at any time during PIC assembly.

It localises to the plastid. The protein localises to the chloroplast. Functionally, one of the essential components for the initiation of protein synthesis. Stabilizes the binding of IF-2 and IF-3 on the 30S subunit to which N-formylmethionyl-tRNA(fMet) subsequently binds. Helps modulate mRNA selection, yielding the 30S pre-initiation complex (PIC). Upon addition of the 50S ribosomal subunit IF-1, IF-2 and IF-3 are released leaving the mature 70S translation initiation complex. The protein is Translation initiation factor IF-1, chloroplastic of Oryza sativa subsp. indica (Rice).